A 1157-amino-acid chain; its full sequence is Probable inactive leucine-rich repeat receptor kinase XIAO (1157 aa).

Positions 1-21 (MPPPPRLLFLLVMLLVVAAPG) are cleaved as a signal peptide. N-linked (GlcNAc...) asparagine glycosylation is present at N58. LRR repeat units lie at residues 101–125 (LVYL…LSRI), 127–149 (SLRA…FLAN), 150–172 (LTNL…VSFP), 173–196 (PSLK…VSAS), 198–220 (TSLQ…SLGT), 221–245 (LQDL…LSNC), 247–269 (ALLH…VAAI), 270–293 (PSLQ…AFGG), 296–319 (NSSL…VSLG), 320–343 (KDLQ…LAGA), 344–367 (GGLT…VGQL), 368–391 (TALQ…IGRC), 393–414 (ALQV…ALGG), 415–439 (LRRL…LGNL), 440–463 (SWLE…LFVL), 464–487 (GNLT…IGNL), 489–511 (ALQS…IGNL), 513–536 (NLRV…LFGL), 537–559 (PQLQ…GFSS), 561–583 (WSLR…TYGY), 584–608 (LPSL…LANC), 609–631 (SNLT…DFAR), 632–656 (LGEL…ISNC), 658–680 (SLVT…LSNL), 681–704 (SKLQ…LAQI), and 706–728 (GMLS…LGSR). N149 carries N-linked (GlcNAc...) asparagine glycosylation. Residues N192, N204, and N244 are each glycosylated (N-linked (GlcNAc...) asparagine). N296 carries an N-linked (GlcNAc...) asparagine glycan. N438 carries an N-linked (GlcNAc...) asparagine glycan. N-linked (GlcNAc...) asparagine glycans are attached at residues N465, N494, and N524. 7 N-linked (GlcNAc...) asparagine glycosylation sites follow: N567, N607, N610, N655, N679, N692, and N711. Residues 765–785 (LALLIGVVAATVLLLVLFCCC) form a helical membrane-spanning segment. The segment at 804–825 (VKKRRRSPGRGSGSSGTSTDSV) is disordered. In terms of domain architecture, Protein kinase spans 849–1144 (FDEENVLSRG…LEGCRVGPDI (296 aa)). Residues 855-863 (LSRGRHGLV), 930-932 (DYM), 936-939 (NLAT), 980-985 (DVKPQN), and D998 contribute to the ATP site.

Belongs to the protein kinase superfamily. Ser/Thr protein kinase family. As to expression, expressed in developing culm, coleoptile, primary root, young spikelet, young leaf blade and leaf sheath, floral meristem primordia, stamen primordia, and lemma and palea primordia.

Its subcellular location is the cell membrane. Functionally, functions in the early stages of organ development by regulating cell division rate. Is probably involved in the regulation of a number of cell-cycle genes. May act as regulator of brassinosteroid (BR) signaling and cell-cycle controlling organ growth. This Oryza sativa subsp. japonica (Rice) protein is Probable inactive leucine-rich repeat receptor kinase XIAO.